Reading from the N-terminus, the 275-residue chain is MGYVVSTFYRFVHLSNYYDIQPVLKEFCVQHSIKGTIILAEQGINATIAADKQSSLDEFFSFLNLDDRLKDIRYHKSFAMHNPFSKMKVKLRKELVCLGIEDFDNSVCGEYVSPQDWDDLISRSDVYTIDTRNTYEINFGKFKNAINPQTKCFRDFPEWAISWASNKVDQDPIIAMYCTGGIRCEKSTAFMKDLGFSKVYHLKGGILEYFKSTQNKNSLWEGDCFTFDDRIAVDNKLVPAHVKCVSCDVCVTPEEMKSITRGHVLCFNCKENVKI.

One can recognise a Rhodanese domain in the interval 122 to 218 (SRSDVYTIDT…YFKSTQNKNS (97 aa)). Catalysis depends on Cys-178, which acts as the Cysteine persulfide intermediate.

The protein belongs to the TrhO family.

It catalyses the reaction uridine(34) in tRNA + AH2 + O2 = 5-hydroxyuridine(34) in tRNA + A + H2O. Functionally, catalyzes oxygen-dependent 5-hydroxyuridine (ho5U) modification at position 34 in tRNAs. In Ehrlichia chaffeensis (strain ATCC CRL-10679 / Arkansas), this protein is tRNA uridine(34) hydroxylase.